Consider the following 425-residue polypeptide: MSTIIDIHAREILDSRGNPTVEVDVTLESGAFGRAAVPSGASTGAHEAVEKRDGDKSRYMGKGVLEAVAAVNGEIAEMLVGFDATEQVGIDRTMIEMDGTPNKGRLGANAILGVSLAVAKAAAEFTNQPLFRYVGGSSARVLPVPMMNIINGGEHADNPIDIQEFMIMPVAAQNVREAIRMGSEVFHTLKKELAAGGFNTGIGDEGGFAPNISSTREALDYILRSIEKAGYKPGEDIYLALDCASTEYFKGGKYEMKGEGKSLTSAENVDYLAALCADYPIISIEDGCAEDDWEGWKLLTDKLGAKVQLVGDDLFVTNPKRLEQGIKAGVANSMLVKVNQIGSLTETLMAVDMAHRARYTNVMSHRSGETEDATIADLAVATNCGQIKTGSLSRSDRLAKYNQLIRIEEMLGEVAEYAGRSILKV.

Q163 is a binding site for (2R)-2-phosphoglycerate. Residue E205 is the Proton donor of the active site. D242, E285, and D312 together coordinate Mg(2+). Residues K337, R366, S367, and K388 each contribute to the (2R)-2-phosphoglycerate site. K337 serves as the catalytic Proton acceptor.

Belongs to the enolase family. Mg(2+) serves as cofactor.

Its subcellular location is the cytoplasm. It localises to the secreted. The protein localises to the cell surface. It carries out the reaction (2R)-2-phosphoglycerate = phosphoenolpyruvate + H2O. Its pathway is carbohydrate degradation; glycolysis; pyruvate from D-glyceraldehyde 3-phosphate: step 4/5. In terms of biological role, catalyzes the reversible conversion of 2-phosphoglycerate (2-PG) into phosphoenolpyruvate (PEP). It is essential for the degradation of carbohydrates via glycolysis. The polypeptide is Enolase (Cereibacter sphaeroides (strain ATCC 17029 / ATH 2.4.9) (Rhodobacter sphaeroides)).